The sequence spans 449 residues: Polyadenylation factor subunit 2 (449 aa).

7 WD repeats span residues 77 to 116 (KVKH…FESI), 119 to 158 (AHDS…VKVL), 161 to 200 (AHTE…QERV), 203 to 242 (GHHW…NVST), 245 to 285 (GLKH…RELQ), 288 to 328 (RDDM…SNST), and 337 to 376 (AHEK…DPNA). Residues 411-432 (LPPANETNLGTPQPSILGSESI) form a disordered region. The span at 415–432 (NETNLGTPQPSILGSESI) shows a compositional bias: polar residues.

The protein localises to the nucleus. Required for 3'-end cleavage and polyadenylation of pre-mRNAs. Also involved in chromosome segregation where it has a role in chromosome attachment to the mitotic spindle. The polypeptide is Polyadenylation factor subunit 2 (PSF2) (Eremothecium gossypii (strain ATCC 10895 / CBS 109.51 / FGSC 9923 / NRRL Y-1056) (Yeast)).